A 141-amino-acid polypeptide reads, in one-letter code: MVLERTLSIIKPDAVAKNVIGDIYSRFEKAGLKVVAAKYKQLSRREAEGFYAVHRDRPFFNALVEFMISGPVMIQVLESENAVARHRELLGATNPKDAALGTIRADFAESIEANAAHGSDSVENAAIEVAYFFAATEIILR.

Residues Lys-11, Phe-59, Arg-87, Thr-93, Arg-104, and Asn-114 each contribute to the ATP site. His-117 acts as the Pros-phosphohistidine intermediate in catalysis.

It belongs to the NDK family. In terms of assembly, homotetramer. It depends on Mg(2+) as a cofactor.

The protein resides in the cytoplasm. It catalyses the reaction a 2'-deoxyribonucleoside 5'-diphosphate + ATP = a 2'-deoxyribonucleoside 5'-triphosphate + ADP. It carries out the reaction a ribonucleoside 5'-diphosphate + ATP = a ribonucleoside 5'-triphosphate + ADP. In terms of biological role, major role in the synthesis of nucleoside triphosphates other than ATP. The ATP gamma phosphate is transferred to the NDP beta phosphate via a ping-pong mechanism, using a phosphorylated active-site intermediate. This is Nucleoside diphosphate kinase from Xylella fastidiosa (strain 9a5c).